Reading from the N-terminus, the 475-residue chain is Bifunctional protein HldE (475 aa).

Residues 1 to 318 (MKVTLPDFER…ENAVRGRAET (318 aa)) are ribokinase. Residue 195–198 (NLSE) participates in ATP binding. Residue aspartate 264 is part of the active site. The interval 344–475 (MTNGVFDILH…NIIKKIQKNS (132 aa)) is cytidylyltransferase.

In the N-terminal section; belongs to the carbohydrate kinase PfkB family. The protein in the C-terminal section; belongs to the cytidylyltransferase family. As to quaternary structure, homodimer.

The catalysed reaction is D-glycero-beta-D-manno-heptose 7-phosphate + ATP = D-glycero-beta-D-manno-heptose 1,7-bisphosphate + ADP + H(+). It catalyses the reaction D-glycero-beta-D-manno-heptose 1-phosphate + ATP + H(+) = ADP-D-glycero-beta-D-manno-heptose + diphosphate. It functions in the pathway nucleotide-sugar biosynthesis; ADP-L-glycero-beta-D-manno-heptose biosynthesis; ADP-L-glycero-beta-D-manno-heptose from D-glycero-beta-D-manno-heptose 7-phosphate: step 1/4. The protein operates within nucleotide-sugar biosynthesis; ADP-L-glycero-beta-D-manno-heptose biosynthesis; ADP-L-glycero-beta-D-manno-heptose from D-glycero-beta-D-manno-heptose 7-phosphate: step 3/4. Its function is as follows. Catalyzes the phosphorylation of D-glycero-D-manno-heptose 7-phosphate at the C-1 position to selectively form D-glycero-beta-D-manno-heptose-1,7-bisphosphate. Catalyzes the ADP transfer from ATP to D-glycero-beta-D-manno-heptose 1-phosphate, yielding ADP-D-glycero-beta-D-manno-heptose. The chain is Bifunctional protein HldE from Cronobacter sakazakii (strain ATCC BAA-894) (Enterobacter sakazakii).